A 351-amino-acid polypeptide reads, in one-letter code: Synaptonemal complex central element protein 1 (351 aa).

Over residues 1–10 (MAGRSLTSKA) the composition is skewed to polar residues. Disordered stretches follow at residues 1–31 (MAGRSLTSKAEPTAGAVDRAEKAGGQDTSSQ) and 267–351 (KCQQ…KELF). Positions 52–290 (RVEVLINRIN…ELEKHGMQVP (239 aa)) form a coiled coil.

The protein belongs to the SYCE family. In terms of assembly, homodimer. Found in a complex with SYCP1 and SYCE2. Interacts with SYCP1, SYCE2 and SYCE3. Interacts with SIX6OS1.

Its subcellular location is the nucleus. The protein localises to the chromosome. In terms of biological role, major component of the transverse central element of synaptonemal complexes (SCS), formed between homologous chromosomes during meiotic prophase. Requires SYCP1 in order to be incorporated into the central element. May have a role in the synaptonemal complex assembly, stabilization and recombination. The polypeptide is Synaptonemal complex central element protein 1 (SYCE1) (Homo sapiens (Human)).